A 218-amino-acid polypeptide reads, in one-letter code: Ribose-5-phosphate isomerase A (218 aa).

Residues 28 to 31 (TGST), 81 to 84 (DGAD), and 94 to 97 (KGGG) contribute to the substrate site. Glu103 (proton acceptor) is an active-site residue. Lys121 is a substrate binding site.

This sequence belongs to the ribose 5-phosphate isomerase family. Homodimer.

The enzyme catalyses aldehydo-D-ribose 5-phosphate = D-ribulose 5-phosphate. It participates in carbohydrate degradation; pentose phosphate pathway; D-ribose 5-phosphate from D-ribulose 5-phosphate (non-oxidative stage): step 1/1. Its function is as follows. Catalyzes the reversible conversion of ribose-5-phosphate to ribulose 5-phosphate. In Yersinia pseudotuberculosis serotype IB (strain PB1/+), this protein is Ribose-5-phosphate isomerase A.